Reading from the N-terminus, the 456-residue chain is Potassium voltage-gated channel subfamily A member 7 (456 aa).

Residues 144–164 (VLAVVSVLVILVSIVVFCLET) form a helical membrane-spanning segment. N191 carries an N-linked (GlcNAc...) asparagine glycan. Residues 209-229 (FFVVETLCICWFSFELLVRLL) traverse the membrane as a helical segment. C231 is lipidated: S-palmitoyl cysteine. Residues 241–261 (VMNLIDFVAILPYFVALGTEL) traverse the membrane as a helical segment. The chain crosses the membrane as a helical; Voltage-sensor span at residues 276-295 (ILRVIRLVRVFRIFKLSRHS). The chain crosses the membrane as a helical span at residues 312–332 (LGLLIFFLFIGVVLFSSAVYF). The Selectivity filter motif lies at 358–363 (TVGYGD). A helical membrane pass occupies residues 373–393 (IVGSLCAIAGVLTISLPVPVI).

Belongs to the potassium channel family. A (Shaker) (TC 1.A.1.2) subfamily. Kv1.7/KCNA7 sub-subfamily. As to quaternary structure, heterotetramer of potassium channel proteins. As to expression, highly expressed in skeletal muscle, heart and kidney.

It is found in the membrane. The enzyme catalyses K(+)(in) = K(+)(out). Mediates the voltage-dependent potassium ion permeability of excitable membranes. Assuming opened or closed conformations in response to the voltage difference across the membrane, the protein forms a potassium-selective channel through which potassium ions may pass in accordance with their electrochemical gradient. The sequence is that of Potassium voltage-gated channel subfamily A member 7 (KCNA7) from Homo sapiens (Human).